A 391-amino-acid polypeptide reads, in one-letter code: Zinc finger protein DPF3 (391 aa).

Residues 152–165 (ENGDGFHDDEDFEV) show a composition bias toward acidic residues. Disordered stretches follow at residues 152–200 (ENGD…PYVC) and 236–266 (LAEEEGEEERETEIPQSPPVHHENHKPQKAP). A compositionally biased stretch (basic residues) spans 169–183 (KRKHRNKGRGRGSGR). The C2H2-type zinc finger occupies 198 to 235 (YVCDNRYKQKHNSKTADSVCGKRYKNRPGLSYHYAHTH). PHD-type zinc fingers lie at residues 273–333 (NDYC…CKSC) and 330–380 (CKSC…CQNL).

Component of the BAF complex. Interacts with acetylated histones H3 and H4. Component of neuron-specific chromatin remodeling complex (nBAF complex), a subfamily of ATP-dependent SWI/SNF chromatin remodeling complexes. Expressed in the heart and somites.

Its subcellular location is the nucleus. In terms of biological role, muscle-specific component of the BAF complex, a multiprotein complex involved in transcriptional activation and repression of select genes by chromatin remodeling (alteration of DNA-nucleosome topology). Specifically binds acetylated lysines on histone 3 and 4. In the complex, it acts as a tissue-specific anchor between histone acetylations and methylations and chromatin remodeling. Belongs to the neuron-specific chromatin remodeling complex (nBAF complex) and may play a role in neural development. Plays an essential role in heart and skeletal muscle development. The protein is Zinc finger protein DPF3 (dpf3) of Danio rerio (Zebrafish).